Reading from the N-terminus, the 507-residue chain is Probable cytosol aminopeptidase (507 aa).

The Mn(2+) site is built by K254 and D259. Residue K266 is part of the active site. Mn(2+) is bound by residues D277, D336, and E338. Residue R340 is part of the active site. Residues P486–A507 are disordered. Residues A489–A507 are compositionally biased toward basic residues.

It belongs to the peptidase M17 family. Mn(2+) is required as a cofactor.

It localises to the cytoplasm. The catalysed reaction is Release of an N-terminal amino acid, Xaa-|-Yaa-, in which Xaa is preferably Leu, but may be other amino acids including Pro although not Arg or Lys, and Yaa may be Pro. Amino acid amides and methyl esters are also readily hydrolyzed, but rates on arylamides are exceedingly low.. It carries out the reaction Release of an N-terminal amino acid, preferentially leucine, but not glutamic or aspartic acids.. Presumably involved in the processing and regular turnover of intracellular proteins. Catalyzes the removal of unsubstituted N-terminal amino acids from various peptides. The sequence is that of Probable cytosol aminopeptidase from Polaromonas sp. (strain JS666 / ATCC BAA-500).